Consider the following 366-residue polypeptide: Peptide chain release factor 2 (366 aa).

Position 253 is an N5-methylglutamine (Gln253).

The protein belongs to the prokaryotic/mitochondrial release factor family. Post-translationally, methylated by PrmC. Methylation increases the termination efficiency of RF2.

It localises to the cytoplasm. Functionally, peptide chain release factor 2 directs the termination of translation in response to the peptide chain termination codons UGA and UAA. The protein is Peptide chain release factor 2 of Yersinia pseudotuberculosis serotype I (strain IP32953).